The following is a 341-amino-acid chain: L-threonine 3-dehydrogenase (341 aa).

Cysteine 38 serves as a coordination point for Zn(2+). Residues threonine 40 and histidine 43 each act as charge relay system in the active site. 6 residues coordinate Zn(2+): histidine 63, glutamate 64, cysteine 93, cysteine 96, cysteine 99, and cysteine 107. NAD(+) contacts are provided by residues isoleucine 175, aspartate 195, arginine 200, 262–264, and 286–287; these read LGI and IY.

Belongs to the zinc-containing alcohol dehydrogenase family. Homotetramer. Zn(2+) is required as a cofactor.

The protein localises to the cytoplasm. It carries out the reaction L-threonine + NAD(+) = (2S)-2-amino-3-oxobutanoate + NADH + H(+). The protein operates within amino-acid degradation; L-threonine degradation via oxydo-reductase pathway; glycine from L-threonine: step 1/2. In terms of biological role, catalyzes the NAD(+)-dependent oxidation of L-threonine to 2-amino-3-ketobutyrate. In Shewanella baltica (strain OS223), this protein is L-threonine 3-dehydrogenase.